A 273-amino-acid polypeptide reads, in one-letter code: UPF0380 protein YfjQ (273 aa).

This sequence belongs to the UPF0380 family.

This is UPF0380 protein YfjQ (yfjQ) from Escherichia coli (strain K12).